A 329-amino-acid polypeptide reads, in one-letter code: Sex comb on midleg-like protein 1 (329 aa).

Phosphoserine is present on residues S138 and S238. A disordered region spans residues 138-157; sequence SPTLPVSRRENNSPSNLPRP. In terms of domain architecture, SAM spans 258–325; sequence WSVEAVVLFL…YYIDRLKQGK (68 aa).

Belongs to the SCM family. Ubiquitous. Expressed in fetal and adult tissues.

Its subcellular location is the nucleus. Functionally, putative Polycomb group (PcG) protein. PcG proteins act by forming multiprotein complexes, which are required to maintain the transcriptionally repressive state of homeotic genes throughout development. May be involved in spermatogenesis during sexual maturation. The protein is Sex comb on midleg-like protein 1 (SCML1) of Homo sapiens (Human).